The following is a 636-amino-acid chain: Rik1-associated factor 2 (636 aa).

Component of the Clr4 methyltransferase complex (ClrC) composed of at least clr4, rik1, pcu4, rbx1, raf1 and raf2. The cullin pcu4, rik1, raf1, raf2 and the ring-box protein rbx1 are components of an E3 ubiquitin ligase, whose activity is essential for heterochromatin assembly. Interacts with pcu4.

It localises to the cytoplasm. It is found in the mitochondrion. Its subcellular location is the nucleus. The protein localises to the chromosome. In terms of biological role, component of the Clr4 methyltransferase complex (ClrC) which contributes to the establishment of heterochromatin by specifically methylating histone H3 to form H3K9me. ClrC preferentially ubiquitylates H3K14 and ClrC-mediated H3 ubiquitination promotes clr4 methyltransferase activity for the methylation of H3K9. H3K9me represents a specific tag for epigenetic transcriptional repression by recruiting swi6/HP1 to methylated histones which leads to transcriptional silencing within centromeric heterochromatin, telomeric regions and at the silent mating-type loci. Has a role in both mitotic and meiotic chromosome segregation. The sequence is that of Rik1-associated factor 2 (raf2) from Schizosaccharomyces pombe (strain 972 / ATCC 24843) (Fission yeast).